Reading from the N-terminus, the 564-residue chain is Potassium-transporting ATPase potassium-binding subunit (564 aa).

10 helical membrane-spanning segments follow: residues 4-24 (YDYW…PFLG), 67-87 (TLAL…ILLF), 135-155 (VGLT…LVAL), 179-199 (LYGL…QGVP), 258-278 (FEVA…GHYV), 286-306 (AIIG…LWAE), 382-402 (AGLY…GLMI), 420-440 (LLVV…AIAA), 487-507 (LMLG…VLAL), and 528-548 (GPLF…LTFL).

This sequence belongs to the KdpA family. The system is composed of three essential subunits: KdpA, KdpB and KdpC.

The protein localises to the cell inner membrane. Its function is as follows. Part of the high-affinity ATP-driven potassium transport (or Kdp) system, which catalyzes the hydrolysis of ATP coupled with the electrogenic transport of potassium into the cytoplasm. This subunit binds the periplasmic potassium ions and delivers the ions to the membrane domain of KdpB through an intramembrane tunnel. This chain is Potassium-transporting ATPase potassium-binding subunit, found in Pseudomonas fluorescens (strain Pf0-1).